The chain runs to 502 residues: Keratin-associated protein 16-1 (502 aa).

Repeat copies occupy residues cysteine 4–arginine 8, cysteine 58–serine 62, cysteine 73–threonine 77, cysteine 93–threonine 97, cysteine 108–valine 112, cysteine 113–threonine 117, cysteine 133–threonine 137, cysteine 152–serine 156, cysteine 177–valine 181, cysteine 187–valine 191, cysteine 212–valine 216, cysteine 222–valine 226, cysteine 272–glycine 276, cysteine 292–serine 296, and cysteine 347–glycine 351. Positions cysteine 73–proline 307 are 15 X 5 AA repeats of C-C-X(3). Residues arginine 435–arginine 502 are disordered. Over residues alanine 489 to arginine 502 the composition is skewed to low complexity.

The protein belongs to the KRTAP type 16 family. In terms of assembly, interacts with hair keratins.

Functionally, in the hair cortex, hair keratin intermediate filaments are embedded in an interfilamentous matrix, consisting of hair keratin-associated proteins (KRTAP), which are essential for the formation of a rigid and resistant hair shaft through their extensive disulfide bond cross-linking with abundant cysteine residues of hair keratins. The matrix proteins include the high-sulfur and high-glycine-tyrosine keratins. In Mus musculus (Mouse), this protein is Keratin-associated protein 16-1 (Krtap16-1).